The primary structure comprises 607 residues: Probable LRR receptor-like serine/threonine-protein kinase At5g65240 (607 aa).

The N-terminal stretch at 1 to 24 is a signal peptide; that stretch reads MALLIITALVFSSLWSSVSPDAQG. Residues 25–219 are Extracellular-facing; the sequence is DALFALRSSL…SGDSSSRKTG (195 aa). 2 N-linked (GlcNAc...) asparagine glycosylation sites follow: N74 and N110. LRR repeat units follow at residues 87–111, 112–135, 137–159, and 160–183; these read LTTL…IGNL, SSLT…LGNL, NLQF…LTGL, and SKLI…LFKI. N-linked (GlcNAc...) asparagine glycosylation is found at N149, N171, N187, and N192. A helical transmembrane segment spans residues 220 to 240; that stretch reads IIAGVVSGIAVILLGFFFFFF. Residues 241–607 lie on the Cytoplasmic side of the membrane; that stretch reads CKDKHKGYKR…QDAIELSGGR (367 aa). A Phosphothreonine modification is found at T281. The Protein kinase domain occupies 284–568; sequence FSEKNVLGQG…EGEGLAERWE (285 aa). Residue 290–298 coordinates ATP; that stretch reads LGQGGFGKV. T307 bears the Phosphothreonine mark. K312 lines the ATP pocket. S365 is modified (phosphoserine). Catalysis depends on D411, which acts as the Proton acceptor. Phosphothreonine is present on residues T444, T445, and T450. A Phosphoserine modification is found at S460. Residue T461 is modified to Phosphothreonine. At S465 the chain carries Phosphoserine. T541 carries the phosphothreonine modification.

Belongs to the protein kinase superfamily. Ser/Thr protein kinase family.

The protein resides in the cell membrane. The enzyme catalyses L-seryl-[protein] + ATP = O-phospho-L-seryl-[protein] + ADP + H(+). It catalyses the reaction L-threonyl-[protein] + ATP = O-phospho-L-threonyl-[protein] + ADP + H(+). In Arabidopsis thaliana (Mouse-ear cress), this protein is Probable LRR receptor-like serine/threonine-protein kinase At5g65240.